Consider the following 380-residue polypeptide: 8-amino-7-oxononanoate synthase (380 aa).

Residue arginine 26 participates in substrate binding. Position 104-105 (104-105 (GY)) interacts with pyridoxal 5'-phosphate. Residue histidine 129 participates in substrate binding. Pyridoxal 5'-phosphate is bound by residues serine 175, 200–203 (DEAH), and 232–235 (TLSK). Lysine 235 carries the N6-(pyridoxal phosphate)lysine modification. Position 345 (threonine 345) interacts with substrate.

The protein belongs to the class-II pyridoxal-phosphate-dependent aminotransferase family. BioF subfamily. In terms of assembly, homodimer. The cofactor is pyridoxal 5'-phosphate.

The catalysed reaction is 6-carboxyhexanoyl-[ACP] + L-alanine + H(+) = (8S)-8-amino-7-oxononanoate + holo-[ACP] + CO2. It participates in cofactor biosynthesis; biotin biosynthesis. Catalyzes the decarboxylative condensation of pimeloyl-[acyl-carrier protein] and L-alanine to produce 8-amino-7-oxononanoate (AON), [acyl-carrier protein], and carbon dioxide. This Mycolicibacterium gilvum (strain PYR-GCK) (Mycobacterium gilvum (strain PYR-GCK)) protein is 8-amino-7-oxononanoate synthase.